The chain runs to 237 residues: CD63 antigen (237 aa).

Topologically, residues 1 to 11 are cytoplasmic; sequence MAVEGGMKCVK. A helical membrane pass occupies residues 12–32; the sequence is FLLYVLLLVFCACAVGLIAVG. The Extracellular portion of the chain corresponds to 33 to 51; the sequence is VGTHLVLNQTITHGATPSF. Asn40 carries N-linked (GlcNAc...) asparagine glycosylation. A helical transmembrane segment spans residues 52-72; sequence LLPVVIIAVGAFLFLVAFVGC. Over 73-81 the chain is Cytoplasmic; that stretch reads CGACKENYC. Residues 82 to 102 traverse the membrane as a helical segment; that stretch reads LMITFAIFLSLIMLVEVAAAI. Over 103 to 202 the chain is Extracellular; sequence AGYVFRDKVR…KIAAWLRKNV (100 aa). Asn130, Asn150, and Asn171 each carry an N-linked (GlcNAc...) asparagine glycan. A helical membrane pass occupies residues 203 to 223; sequence LVVAAAALGIAFVEILGIVLA. Residues 224-237 lie on the Cytoplasmic side of the membrane; it reads CCLVKSIRSGYEVM. The Lysosomal targeting motif signature appears at 233–237; it reads GYEVM.

This sequence belongs to the tetraspanin (TM4SF) family. As to quaternary structure, interacts with TIMP1 and ITGB1 and recruits TIMP1 to ITGB1. Interacts with CD9. Identified in a complex with CD9 and ITGB3. Interacts with PMEL. Interacts with KDR/VEGFR2; identified in a complex with ITGB1 and KDR/VEGFR2 and is required to recruit KDR to ITGB1 complexes. Interacts with SYT7. In terms of processing, palmitoylated at a low, basal level in unstimulated platelets. The level of palmitoylation increases when platelets are activated by thrombin (in vitro).

It is found in the cell membrane. It localises to the lysosome membrane. The protein localises to the late endosome membrane. Its subcellular location is the endosome. The protein resides in the multivesicular body. It is found in the melanosome. It localises to the secreted. The protein localises to the extracellular exosome. Its subcellular location is the cell surface. Functionally, functions as a cell surface receptor for TIMP1 and plays a role in the activation of cellular signaling cascades. Plays a role in the activation of ITGB1 and integrin signaling, leading to the activation of AKT, FAK/PTK2 and MAP kinases. Promotes cell survival, reorganization of the actin cytoskeleton, cell adhesion, spreading and migration, via its role in the activation of AKT and FAK/PTK2. Plays a role in VEGFA signaling via its role in regulating the internalization of KDR/VEGFR2. Plays a role in intracellular vesicular transport processes, and is required for normal trafficking of the PMEL luminal domain that is essential for the development and maturation of melanocytes. Plays a role in the adhesion of leukocytes onto endothelial cells via its role in the regulation of SELP trafficking. May play a role in mast cell degranulation in response to Ms4a2/FceRI stimulation, but not in mast cell degranulation in response to other stimuli. In Bos taurus (Bovine), this protein is CD63 antigen (CD63).